Here is a 101-residue protein sequence, read N- to C-terminus: Apolipoprotein C-II (101 aa).

The signal sequence occupies residues 1–22 (MGTRFLLALFLVLLVLGFEVQG). Residues 66–74 (TVDEKLRDM) are lipid binding. The interval 78-101 (STAAMSTYAGILTDQVLSMLKGEE) is lipoprotein lipase cofactor.

It belongs to the apolipoprotein C2 family. Post-translationally, proapolipoprotein C-II is synthesized as a sialic acid containing glycoprotein which is subsequently desialylated prior to its proteolytic processing. In terms of processing, proapolipoprotein C-II, the major form found in plasma undergoes proteolytic cleavage of its N-terminal hexapeptide to generate apolipoprotein C-II, which occurs as the minor form in plasma.

Its subcellular location is the secreted. In terms of biological role, component of chylomicrons, very low-density lipoproteins (VLDL), low-density lipoproteins (LDL), and high-density lipoproteins (HDL) in plasma. Plays an important role in lipoprotein metabolism as an activator of lipoprotein lipase. Both proapolipoprotein C-II and apolipoprotein C-II can activate lipoprotein lipase. This Aotus nancymaae (Ma's night monkey) protein is Apolipoprotein C-II (APOC2).